Reading from the N-terminus, the 117-residue chain is MISKPDKNKLRVKRHKRVRGKISGTAARPRLNVFRSNANIYAQLIDDVAGVTLASASSHDAEVSGTKTEQATKVGELIATRGKAAGFEDVIFDRGGYLYHGRVQALAESARENGLKF.

Belongs to the universal ribosomal protein uL18 family. In terms of assembly, part of the 50S ribosomal subunit; part of the 5S rRNA/L5/L18/L25 subcomplex. Contacts the 5S and 23S rRNAs.

Its function is as follows. This is one of the proteins that bind and probably mediate the attachment of the 5S RNA into the large ribosomal subunit, where it forms part of the central protuberance. The protein is Large ribosomal subunit protein uL18 of Leuconostoc citreum (strain KM20).